The sequence spans 135 residues: S-adenosylmethionine decarboxylase proenzyme (135 aa).

Ser64 functions as the Schiff-base intermediate with substrate; via pyruvic acid in the catalytic mechanism. A Pyruvic acid (Ser); by autocatalysis modification is found at Ser64. Catalysis depends on His69, which acts as the Proton acceptor; for processing activity. The active-site Proton donor; for catalytic activity is the Cys84.

Belongs to the prokaryotic AdoMetDC family. Type 1 subfamily. In terms of assembly, heterotetramer of two alpha and two beta chains arranged as a dimer of alpha/beta heterodimers. It depends on pyruvate as a cofactor. Post-translationally, is synthesized initially as an inactive proenzyme. Formation of the active enzyme involves a self-maturation process in which the active site pyruvoyl group is generated from an internal serine residue via an autocatalytic post-translational modification. Two non-identical subunits are generated from the proenzyme in this reaction, and the pyruvate is formed at the N-terminus of the alpha chain, which is derived from the carboxyl end of the proenzyme. The post-translation cleavage follows an unusual pathway, termed non-hydrolytic serinolysis, in which the side chain hydroxyl group of the serine supplies its oxygen atom to form the C-terminus of the beta chain, while the remainder of the serine residue undergoes an oxidative deamination to produce ammonia and the pyruvoyl group blocking the N-terminus of the alpha chain.

The catalysed reaction is S-adenosyl-L-methionine + H(+) = S-adenosyl 3-(methylsulfanyl)propylamine + CO2. It participates in amine and polyamine biosynthesis; S-adenosylmethioninamine biosynthesis; S-adenosylmethioninamine from S-adenosyl-L-methionine: step 1/1. Its function is as follows. Catalyzes the decarboxylation of S-adenosylmethionine to S-adenosylmethioninamine (dcAdoMet), the propylamine donor required for the synthesis of the polyamines spermine and spermidine from the diamine putrescine. The sequence is that of S-adenosylmethionine decarboxylase proenzyme from Aquifex aeolicus (strain VF5).